The primary structure comprises 429 residues: Aspartate--tRNA(Asp/Asn) ligase (429 aa).

Residue Glu167 participates in L-aspartate binding. Positions 189–192 (QLYK) are aspartate. Arg210 lines the L-aspartate pocket. Residues 210 to 212 (RAE) and Glu352 each bind ATP. The Mg(2+) site is built by Glu352 and Ser355. Residues Ser355 and Arg359 each contribute to the L-aspartate site. Residue 400 to 403 (GLAR) coordinates ATP.

It belongs to the class-II aminoacyl-tRNA synthetase family. Type 2 subfamily. In terms of assembly, homodimer. It depends on Mg(2+) as a cofactor.

The protein resides in the cytoplasm. It catalyses the reaction tRNA(Asx) + L-aspartate + ATP = L-aspartyl-tRNA(Asx) + AMP + diphosphate. Functionally, aspartyl-tRNA synthetase with relaxed tRNA specificity since it is able to aspartylate not only its cognate tRNA(Asp) but also tRNA(Asn). Reaction proceeds in two steps: L-aspartate is first activated by ATP to form Asp-AMP and then transferred to the acceptor end of tRNA(Asp/Asn). The protein is Aspartate--tRNA(Asp/Asn) ligase of Saccharolobus solfataricus (strain ATCC 35092 / DSM 1617 / JCM 11322 / P2) (Sulfolobus solfataricus).